A 622-amino-acid chain; its full sequence is uncharacterized protein (622 aa).

The first 20 residues, 1–20, serve as a signal peptide directing secretion; it reads MKIKAVAIFLSLLMIISLFS.

This is an uncharacterized protein from Methanocaldococcus jannaschii (strain ATCC 43067 / DSM 2661 / JAL-1 / JCM 10045 / NBRC 100440) (Methanococcus jannaschii).